The sequence spans 205 residues: Protein N-terminal glutamine amidohydrolase (205 aa).

Active-site residues include cysteine 20, histidine 74, and aspartate 90.

It belongs to the NTAQ1 family. Monomer.

It carries out the reaction N-terminal L-glutaminyl-[protein] + H2O = N-terminal L-glutamyl-[protein] + NH4(+). Its function is as follows. Mediates the side-chain deamidation of N-terminal glutamine residues to glutamate, an important step in N-end rule pathway of protein degradation. Conversion of the resulting N-terminal glutamine to glutamate renders the protein susceptible to arginylation, polyubiquitination and degradation as specified by the N-end rule. Does not act on substrates with internal or C-terminal glutamine and does not act on non-glutamine residues in any position. In Drosophila mojavensis (Fruit fly), this protein is Protein N-terminal glutamine amidohydrolase (tun).